Here is a 362-residue protein sequence, read N- to C-terminus: Adenosine deaminase (362 aa).

Residues His-19 and His-21 each coordinate Zn(2+). His-21, Asp-23, and Gly-181 together coordinate substrate. His-208 provides a ligand contact to Zn(2+). Glu-211 serves as the catalytic Proton donor. A Zn(2+)-binding site is contributed by Asp-300.

This sequence belongs to the metallo-dependent hydrolases superfamily. Adenosine and AMP deaminases family. Adenosine deaminase subfamily. Zn(2+) serves as cofactor.

It carries out the reaction adenosine + H2O + H(+) = inosine + NH4(+). The catalysed reaction is 2'-deoxyadenosine + H2O + H(+) = 2'-deoxyinosine + NH4(+). Catalyzes the hydrolytic deamination of adenosine and 2-deoxyadenosine. This chain is Adenosine deaminase, found in Mycolicibacterium gilvum (strain PYR-GCK) (Mycobacterium gilvum (strain PYR-GCK)).